We begin with the raw amino-acid sequence, 441 residues long: Transcriptional regulatory protein ZraR (441 aa).

One can recognise a Response regulatory domain in the interval 7–121 (DILVVDDDVS…RLQETLEKAL (115 aa)). Asp56 is modified (4-aspartylphosphate). The region spanning 141-370 (MIGSSPAMQH…LENAIERAVV (230 aa)) is the Sigma-54 factor interaction domain. Residues Gly172, Thr173, Arg329, and Arg359 each contribute to the ATP site. Residues 421 to 440 (KTEAARQLGITRKTLLAKLS) constitute a DNA-binding region (H-T-H motif).

Phosphorylated by ZraS.

It localises to the cytoplasm. Its activity is regulated as follows. Activity of the ZraS/ZraR two-component system is repressed by the zinc-bound form of ZraP, which probably interacts with the periplasmic region of ZraS. In terms of biological role, part of the Zra signaling pathway, an envelope stress response (ESR) system composed of the periplasmic accessory protein ZraP, the histidine kinase ZraS and the transcriptional regulator ZraR. The ZraPSR system contributes to antibiotic resistance and is important for membrane integrity in the presence of membrane-targeting biocides. ZraR is a member of the two-component regulatory system ZraS/ZraR. When activated by ZraS, acts in conjunction with sigma-54 to regulate the expression of zraP in the presence of high Zn(2+) or Pb(2+) concentrations. Also positively autoregulates the expression of the zraSR operon. This chain is Transcriptional regulatory protein ZraR (zraR), found in Salmonella typhi.